The chain runs to 4466 residues: Dynein beta chain, ciliary (4466 aa).

Residues Met1–Lys1813 are stem. Ala154–Thr161 is a binding site for ATP. 6 coiled-coil regions span residues Gln482–Leu502, Gln627–Val643, Val734–Gln805, Thr1036–Glu1056, Trp1306–Ala1337, and Leu1443–Lys1468. AAA regions lie at residues Tyr1814–Val2035, Lys2095–Lys2316, Glu2422–Gly2669, and Thr2767–Tyr3016. Residues Gly1852–Thr1859, Gly2133–Ser2140, Gly2460–Ser2467, and Gly2805–Gln2812 contribute to the ATP site. Coiled-coil stretches lie at residues Ser3033 to Glu3134, Glu3263 to Ile3325, and Gln3573 to Lys3642. Residues Ser3033–Ile3325 form a stalk region. AAA stretches follow at residues Leu3409–Val3636 and Val3846–Asn4072.

The protein belongs to the dynein heavy chain family. As to quaternary structure, consists of at least two heavy chains (alpha and beta), three intermediate chains and several light chains.

It localises to the cell projection. Its subcellular location is the cilium. It is found in the flagellum. The protein localises to the cytoplasm. The protein resides in the cytoskeleton. It localises to the flagellum axoneme. In terms of biological role, force generating protein of eukaryotic cilia and flagella. Produces force towards the minus ends of microtubules. Dynein has ATPase activity; the force-producing power stroke is thought to occur on release of ADP. The polypeptide is Dynein beta chain, ciliary (Heliocidaris crassispina (Sea urchin)).